A 242-amino-acid polypeptide reads, in one-letter code: Type III pantothenate kinase (242 aa).

6 to 13 is an ATP binding site; sequence DIGNSVAK. Substrate contacts are provided by residues Tyr-86 and 93 to 96; that span reads GMDR. Asp-95 (proton acceptor) is an active-site residue. Asp-116 provides a ligand contact to K(+). Thr-119 serves as a coordination point for ATP. Thr-171 provides a ligand contact to substrate.

This sequence belongs to the type III pantothenate kinase family. In terms of assembly, homodimer. NH4(+) serves as cofactor. Requires K(+) as cofactor.

It is found in the cytoplasm. The enzyme catalyses (R)-pantothenate + ATP = (R)-4'-phosphopantothenate + ADP + H(+). It functions in the pathway cofactor biosynthesis; coenzyme A biosynthesis; CoA from (R)-pantothenate: step 1/5. Catalyzes the phosphorylation of pantothenate (Pan), the first step in CoA biosynthesis. In Phocaeicola vulgatus (strain ATCC 8482 / DSM 1447 / JCM 5826 / CCUG 4940 / NBRC 14291 / NCTC 11154) (Bacteroides vulgatus), this protein is Type III pantothenate kinase.